The primary structure comprises 256 residues: Imidazole glycerol phosphate synthase subunit HisF (256 aa).

Active-site residues include Asp-12 and Asp-131.

Belongs to the HisA/HisF family. As to quaternary structure, heterodimer of HisH and HisF.

Its subcellular location is the cytoplasm. The catalysed reaction is 5-[(5-phospho-1-deoxy-D-ribulos-1-ylimino)methylamino]-1-(5-phospho-beta-D-ribosyl)imidazole-4-carboxamide + L-glutamine = D-erythro-1-(imidazol-4-yl)glycerol 3-phosphate + 5-amino-1-(5-phospho-beta-D-ribosyl)imidazole-4-carboxamide + L-glutamate + H(+). The protein operates within amino-acid biosynthesis; L-histidine biosynthesis; L-histidine from 5-phospho-alpha-D-ribose 1-diphosphate: step 5/9. In terms of biological role, IGPS catalyzes the conversion of PRFAR and glutamine to IGP, AICAR and glutamate. The HisF subunit catalyzes the cyclization activity that produces IGP and AICAR from PRFAR using the ammonia provided by the HisH subunit. The chain is Imidazole glycerol phosphate synthase subunit HisF from Pseudomonas paraeruginosa (strain DSM 24068 / PA7) (Pseudomonas aeruginosa (strain PA7)).